We begin with the raw amino-acid sequence, 94 residues long: Phosphoribosyl-ATP pyrophosphatase (94 aa).

The protein belongs to the PRA-PH family.

It is found in the cytoplasm. The catalysed reaction is 1-(5-phospho-beta-D-ribosyl)-ATP + H2O = 1-(5-phospho-beta-D-ribosyl)-5'-AMP + diphosphate + H(+). Its pathway is amino-acid biosynthesis; L-histidine biosynthesis; L-histidine from 5-phospho-alpha-D-ribose 1-diphosphate: step 2/9. The polypeptide is Phosphoribosyl-ATP pyrophosphatase (Saccharolobus islandicus (strain Y.N.15.51 / Yellowstone #2) (Sulfolobus islandicus)).